The primary structure comprises 196 residues: Protein GrpE (196 aa).

The tract at residues Met-1–Thr-24 is disordered.

This sequence belongs to the GrpE family. Homodimer.

It localises to the cytoplasm. Its function is as follows. Participates actively in the response to hyperosmotic and heat shock by preventing the aggregation of stress-denatured proteins, in association with DnaK and GrpE. It is the nucleotide exchange factor for DnaK and may function as a thermosensor. Unfolded proteins bind initially to DnaJ; upon interaction with the DnaJ-bound protein, DnaK hydrolyzes its bound ATP, resulting in the formation of a stable complex. GrpE releases ADP from DnaK; ATP binding to DnaK triggers the release of the substrate protein, thus completing the reaction cycle. Several rounds of ATP-dependent interactions between DnaJ, DnaK and GrpE are required for fully efficient folding. The polypeptide is Protein GrpE (Gloeobacter violaceus (strain ATCC 29082 / PCC 7421)).